The following is a 672-amino-acid chain: Acetyl-coenzyme A synthetase (672 aa).

Residues 205–208 (RGGK) and Thr-325 each bind CoA. ATP is bound by residues 401-403 (GEP), 425-430 (DTYWQT), Asp-516, and Arg-531. Position 539 (Ser-539) interacts with CoA. ATP is bound at residue Arg-542. Arg-600 contacts CoA.

It belongs to the ATP-dependent AMP-binding enzyme family.

It carries out the reaction acetate + ATP + CoA = acetyl-CoA + AMP + diphosphate. The polypeptide is Acetyl-coenzyme A synthetase (facA) (Phycomyces blakesleeanus (strain ATCC 8743b / DSM 1359 / FGSC 10004 / NBRC 33097 / NRRL 1555)).